Reading from the N-terminus, the 383-residue chain is Na(+)/H(+) antiporter NhaA (383 aa).

11 helical membrane passes run 14–34, 47–67, 87–107, 117–137, 146–166, 171–191, 205–225, 252–272, 280–300, 321–341, and 356–376; these read AGGI…NSPL, FGMS…FLLI, IFPA…YVAF, GWAI…ALLG, VFLL…IALF, LSSM…MLNA, AILW…GVVI, VAFG…LEGV, MLPL…IFSF, IFAV…ISSL, and LGIL…LHFS.

It belongs to the NhaA Na(+)/H(+) (TC 2.A.33) antiporter family.

Its subcellular location is the cell inner membrane. It carries out the reaction Na(+)(in) + 2 H(+)(out) = Na(+)(out) + 2 H(+)(in). The catalysed reaction is Li(+)(in) + 2 H(+)(out) = Li(+)(out) + 2 H(+)(in). With respect to regulation, activity is regulated by pH. Active at alkaline pH. Amiloride strongly reduces affinity for Na(+), but does not change the Vmax. Na(+)/H(+) antiporter that extrudes sodium in exchange for external protons. Can also transport lithium and potassium. This chain is Na(+)/H(+) antiporter NhaA, found in Vibrio parahaemolyticus serotype O3:K6 (strain RIMD 2210633).